Consider the following 156-residue polypeptide: Cyclic pyranopterin monophosphate synthase (156 aa).

Residues 75-77 (LCH) and 111-112 (ME) contribute to the substrate site. The active site involves D126.

The protein belongs to the MoaC family. In terms of assembly, homohexamer; trimer of dimers.

The enzyme catalyses (8S)-3',8-cyclo-7,8-dihydroguanosine 5'-triphosphate = cyclic pyranopterin phosphate + diphosphate. The protein operates within cofactor biosynthesis; molybdopterin biosynthesis. Catalyzes the conversion of (8S)-3',8-cyclo-7,8-dihydroguanosine 5'-triphosphate to cyclic pyranopterin monophosphate (cPMP). The sequence is that of Cyclic pyranopterin monophosphate synthase from Caulobacter sp. (strain K31).